The sequence spans 577 residues: MNNTHSSVLNKVAYLILHGFDKSYRWHSRITRDAQQRFEQALWQETQKAVKERIAIYERTLADAVGEIYQQVFPHQENNQFWFDLKTRYQKILSDHPQYELAETFYNSVLGRIFKHQKINDEMMFIMPTRCYLAGLQRHLVVHSFDTSGTVRRMLEDIFSQYHFDIAFQDMQRDLQHLDGALRARLNREQLASVHTVEMLKPVFYRSKSAYLIGRICMPDETLPFVIPLSIAEAETSGEKHKIVVEALLTERQDLSVVFSFARAYFMADTQHPAEVVAFLHELLPHKKKFELYIALGLYKHGKTVFYRNFLAHLEESNDQFSIAPGIRGLVMAVFHLPSYGVVFKIIKDEFPESKKITRQHVKDCYKLVKMTDRVGRMADTHEYVNFRLPRHRVEQALVDELLDCCASSIELTDEEVIIKHLYIERKMTPLNIFLEQQPDPALITSALNDLGLCIKQIAAAHIFAGDMLHKNFGITRGGRVIFYDYDEICYLTEREFRTLPKSDDPYAIDTLSVGPTDVFPEQFEHFIVGKKHLKQELKALHGEIMTAEYWQHMQAQSLKGDVPDFIPYNQAKRFVN.

ATP-binding positions include 324 to 330 (APGIRGL) and K345. D380 is a catalytic residue.

Belongs to the AceK family.

It localises to the cytoplasm. The enzyme catalyses L-seryl-[isocitrate dehydrogenase] + ATP = O-phospho-L-seryl-[isocitrate dehydrogenase] + ADP + H(+). In terms of biological role, bifunctional enzyme which can phosphorylate or dephosphorylate isocitrate dehydrogenase (IDH) on a specific serine residue. This is a regulatory mechanism which enables bacteria to bypass the Krebs cycle via the glyoxylate shunt in response to the source of carbon. When bacteria are grown on glucose, IDH is fully active and unphosphorylated, but when grown on acetate or ethanol, the activity of IDH declines drastically concomitant with its phosphorylation. The polypeptide is Isocitrate dehydrogenase kinase/phosphatase (Pseudoalteromonas atlantica (strain T6c / ATCC BAA-1087)).